A 427-amino-acid chain; its full sequence is Glutamate-1-semialdehyde 2,1-aminomutase (427 aa).

Lysine 266 bears the N6-(pyridoxal phosphate)lysine mark.

It belongs to the class-III pyridoxal-phosphate-dependent aminotransferase family. HemL subfamily. Homodimer. The cofactor is pyridoxal 5'-phosphate.

Its subcellular location is the cytoplasm. It carries out the reaction (S)-4-amino-5-oxopentanoate = 5-aminolevulinate. Its pathway is porphyrin-containing compound metabolism; protoporphyrin-IX biosynthesis; 5-aminolevulinate from L-glutamyl-tRNA(Glu): step 2/2. This Aromatoleum aromaticum (strain DSM 19018 / LMG 30748 / EbN1) (Azoarcus sp. (strain EbN1)) protein is Glutamate-1-semialdehyde 2,1-aminomutase.